We begin with the raw amino-acid sequence, 347 residues long: NADH-ubiquinone oxidoreductase chain 2 (347 aa).

The next 10 membrane-spanning stretches (helical) occupy residues 13–33 (VILG…WIGF), 59–79 (YFFT…LNLM), 96–116 (MIMT…FWVP), 122–142 (IPLS…LTVL), 149–169 (INLT…GWGG), 178–198 (IMAY…IYNP), 200–220 (MTLL…MLFM), 240–260 (IVTI…LTGF), 276–296 (IILP…YMRL), and 325–345 (LLTP…MIII).

This sequence belongs to the complex I subunit 2 family. As to quaternary structure, core subunit of respiratory chain NADH dehydrogenase (Complex I) which is composed of 45 different subunits. Interacts with TMEM242.

It localises to the mitochondrion inner membrane. It carries out the reaction a ubiquinone + NADH + 5 H(+)(in) = a ubiquinol + NAD(+) + 4 H(+)(out). Its function is as follows. Core subunit of the mitochondrial membrane respiratory chain NADH dehydrogenase (Complex I) which catalyzes electron transfer from NADH through the respiratory chain, using ubiquinone as an electron acceptor. Essential for the catalytic activity and assembly of complex I. The polypeptide is NADH-ubiquinone oxidoreductase chain 2 (Molossus ater (Black mastiff bat)).